Consider the following 545-residue polypeptide: ATP synthase subunit alpha, mitochondrial (545 aa).

Residues 1-35 constitute a mitochondrion transit peptide; that stretch reads MLARTAAIRSLSRTLINSTKAARPAAAALASTRRL. Phosphoserine occurs at positions 57 and 178. 206-213 contacts ATP; it reads GDRQTGKT.

Belongs to the ATPase alpha/beta chains family. As to quaternary structure, F-type ATPases have 2 components, CF(1) - the catalytic core - and CF(0) - the membrane proton channel. CF(1) has five subunits: alpha(3), beta(3), gamma(1), delta(1), epsilon(1). CF(0) has three main subunits: a, b and c.

It localises to the mitochondrion inner membrane. In terms of biological role, mitochondrial membrane ATP synthase (F(1)F(0) ATP synthase or Complex V) produces ATP from ADP in the presence of a proton gradient across the membrane which is generated by electron transport complexes of the respiratory chain. F-type ATPases consist of two structural domains, F(1) - containing the extramembraneous catalytic core, and F(0) - containing the membrane proton channel, linked together by a central stalk and a peripheral stalk. During catalysis, ATP synthesis in the catalytic domain of F(1) is coupled via a rotary mechanism of the central stalk subunits to proton translocation. Subunits alpha and beta form the catalytic core in F(1). Rotation of the central stalk against the surrounding alpha(3)beta(3) subunits leads to hydrolysis of ATP in three separate catalytic sites on the beta subunits. Subunit alpha does not bear the catalytic high-affinity ATP-binding sites. This is ATP synthase subunit alpha, mitochondrial (ATP1) from Saccharomyces cerevisiae (strain ATCC 204508 / S288c) (Baker's yeast).